The primary structure comprises 320 residues: Probable cell division protein WhiA (320 aa).

The segment at residues 282–315 is a DNA-binding region (H-T-H motif); the sequence is SLEELGRAARPQISKDAVAGRIRRLLQRAEKAEQ.

The protein belongs to the WhiA family.

Involved in cell division and chromosome segregation. The sequence is that of Probable cell division protein WhiA from Bifidobacterium animalis subsp. lactis (strain AD011).